Reading from the N-terminus, the 192-residue chain is dITP/XTP pyrophosphatase (192 aa).

Substrate is bound at residue 7-12 (SNNKNK). Asp68 acts as the Proton acceptor in catalysis. Position 68 (Asp68) interacts with Mg(2+). Residues Thr69, 148 to 151 (FGYD), Lys171, and 176 to 177 (HR) contribute to the substrate site.

Belongs to the HAM1 NTPase family. Homodimer. Requires Mg(2+) as cofactor.

It catalyses the reaction XTP + H2O = XMP + diphosphate + H(+). The enzyme catalyses dITP + H2O = dIMP + diphosphate + H(+). It carries out the reaction ITP + H2O = IMP + diphosphate + H(+). Functionally, pyrophosphatase that catalyzes the hydrolysis of nucleoside triphosphates to their monophosphate derivatives, with a high preference for the non-canonical purine nucleotides XTP (xanthosine triphosphate), dITP (deoxyinosine triphosphate) and ITP. Seems to function as a house-cleaning enzyme that removes non-canonical purine nucleotides from the nucleotide pool, thus preventing their incorporation into DNA/RNA and avoiding chromosomal lesions. This Flavobacterium johnsoniae (strain ATCC 17061 / DSM 2064 / JCM 8514 / BCRC 14874 / CCUG 350202 / NBRC 14942 / NCIMB 11054 / UW101) (Cytophaga johnsonae) protein is dITP/XTP pyrophosphatase.